A 1068-amino-acid chain; its full sequence is Phosphatidylinositol 4,5-bisphosphate 3-kinase catalytic subunit alpha isoform (1068 aa).

The PI3K-ABD domain maps to 16 to 105; the sequence is MPPRILVECL…QPFLKVIEPV (90 aa). Residues 187–289 form the PI3K-RBD domain; sequence KGQIIVVIWV…GRMPNLMLMA (103 aa). Residues 330–487 form the C2 PI3K-type domain; that stretch reads INSALRIKIL…DWFSSVVKFP (158 aa). Positions 517-694 constitute a PIK helical domain; it reads LARDNELREN…GLLLESYCRA (178 aa). One can recognise a PI3K/PI4K catalytic domain in the interval 765–1051; that stretch reads RLEECRIMSS…QMNDAHHGGW (287 aa). The G-loop stretch occupies residues 771 to 777; sequence IMSSAKR. The segment at 912–920 is catalytic loop; it reads GIGDRHNSN. The activation loop stretch occupies residues 931-957; that stretch reads HIDFGHFLDHKKKKFGYKRERVPFVLT.

The protein belongs to the PI3/PI4-kinase family. As to quaternary structure, heterodimer of a catalytic subunit PIK3CA and a p85 regulatory subunit (PIK3R1, PIK3R2 or PIK3R3). Interacts with IRS1 in nuclear extracts. Interacts with RUFY3. Interacts with RASD2. Interacts with APPL1. Interacts with HRAS and KRAS. Interaction with HRAS/KRAS is required for PI3K pathway signaling and cell proliferation stimulated by EGF and FGF2. Interacts with FAM83B; activates the PI3K/AKT signaling cascade.

It catalyses the reaction L-seryl-[protein] + ATP = O-phospho-L-seryl-[protein] + ADP + H(+). It carries out the reaction a 1,2-diacyl-sn-glycero-3-phospho-(1D-myo-inositol) + ATP = a 1,2-diacyl-sn-glycero-3-phospho-(1D-myo-inositol-3-phosphate) + ADP + H(+). The enzyme catalyses a 1,2-diacyl-sn-glycero-3-phospho-(1D-myo-inositol-4,5-bisphosphate) + ATP = a 1,2-diacyl-sn-glycero-3-phospho-(1D-myo-inositol-3,4,5-trisphosphate) + ADP + H(+). The catalysed reaction is 1,2-dioctanoyl-sn-glycero-3-phospho-(1D-myo-inositol-4,5-bisphosphate) + ATP = 1,2-dioctanoyl-sn-glycero-3-phospho-(1D-myo-inositol-3,4,5-trisphosphate) + ADP + H(+). It catalyses the reaction 1-octadecanoyl-2-(5Z,8Z,11Z,14Z)-eicosatetraenoyl-sn-glycero-3-phospho-1D-myo-inositol 4,5-bisphosphate + ATP = 1-octadecanoyl-2-(5Z,8Z,11Z,14Z-eicosatetraenoyl)-sn-glycero-3-phospho-(1D-myo-inositol 3,4,5-triphosphate) + ADP + H(+). It participates in phospholipid metabolism; phosphatidylinositol phosphate biosynthesis. Phosphoinositide-3-kinase (PI3K) phosphorylates phosphatidylinositol (PI) and its phosphorylated derivatives at position 3 of the inositol ring to produce 3-phosphoinositides. Uses ATP and PtdIns(4,5)P2 (phosphatidylinositol 4,5-bisphosphate) to generate phosphatidylinositol 3,4,5-trisphosphate (PIP3). PIP3 plays a key role by recruiting PH domain-containing proteins to the membrane, including AKT1 and PDPK1, activating signaling cascades involved in cell growth, survival, proliferation, motility and morphology. Participates in cellular signaling in response to various growth factors. Involved in the activation of AKT1 upon stimulation by receptor tyrosine kinases ligands such as EGF, insulin, IGF1, VEGFA and PDGF. Involved in signaling via insulin-receptor substrate (IRS) proteins. Essential in endothelial cell migration during vascular development through VEGFA signaling, possibly by regulating RhoA activity. Required for lymphatic vasculature development, possibly by binding to RAS and by activation by EGF and FGF2, but not by PDGF. Regulates invadopodia formation through the PDPK1-AKT1 pathway. Participates in cardiomyogenesis in embryonic stem cells through a AKT1 pathway. Participates in vasculogenesis in embryonic stem cells through PDK1 and protein kinase C pathway. In addition to its lipid kinase activity, it displays a serine-protein kinase activity that results in the autophosphorylation of the p85alpha regulatory subunit as well as phosphorylation of other proteins such as 4EBP1, H-Ras, the IL-3 beta c receptor and possibly others. Plays a role in the positive regulation of phagocytosis and pinocytosis. In Bos taurus (Bovine), this protein is Phosphatidylinositol 4,5-bisphosphate 3-kinase catalytic subunit alpha isoform (PIK3CA).